A 944-amino-acid polypeptide reads, in one-letter code: Putative ATP-dependent RNA helicase (944 aa).

The Helicase ATP-binding domain maps to 66-235 (TTPRSPIDGI…VPLHNLLMKL (170 aa)). 79-86 (HGVGTGKT) is a binding site for ATP. A DEAH box motif is present at residues 183–186 (DEAH). The region spanning 451–523 (CLTREVMTVP…QIIGRGIRYQ (73 aa)) is the Helicase C-terminal domain.

This sequence belongs to the DEAD box helicase family. DEAH subfamily.

It carries out the reaction ATP + H2O = ADP + phosphate + H(+). The polypeptide is Putative ATP-dependent RNA helicase (Heliothis virescens ascovirus 3e (HvAV-3e)).